Here is a 151-residue protein sequence, read N- to C-terminus: MNCIKQFLLAICFSLALTCQDHVLVGGTTTRDIIVPKISEWQVTVVNGLTTGETLFIHCKSKEDDLGEINLKFRNRFSWNFGENMLHSTFFWCYMNKDNGHMNVNVFWDDVILFHRCGWKNCIWTAKTDGLYLWNSASGEDVLSRKWEVGW.

The first 18 residues, 1–18 (MNCIKQFLLAICFSLALT), serve as a signal peptide directing secretion.

The protein belongs to the plant self-incompatibility (S1) protein family. As to expression, restricted to floral tissues.

The protein localises to the secreted. This is S-protein homolog 1 from Arabidopsis thaliana (Mouse-ear cress).